The following is a 328-amino-acid chain: 4-hydroxythreonine-4-phosphate dehydrogenase (328 aa).

Residues His134 and Thr135 each contribute to the substrate site. The a divalent metal cation site is built by His164, His209, and His265. Substrate is bound by residues Lys273, Asn282, and Arg291.

Belongs to the PdxA family. Homodimer. The cofactor is Zn(2+). Requires Mg(2+) as cofactor. Co(2+) is required as a cofactor.

It is found in the cytoplasm. It carries out the reaction 4-(phosphooxy)-L-threonine + NAD(+) = 3-amino-2-oxopropyl phosphate + CO2 + NADH. The protein operates within cofactor biosynthesis; pyridoxine 5'-phosphate biosynthesis; pyridoxine 5'-phosphate from D-erythrose 4-phosphate: step 4/5. In terms of biological role, catalyzes the NAD(P)-dependent oxidation of 4-(phosphooxy)-L-threonine (HTP) into 2-amino-3-oxo-4-(phosphooxy)butyric acid which spontaneously decarboxylates to form 3-amino-2-oxopropyl phosphate (AHAP). The sequence is that of 4-hydroxythreonine-4-phosphate dehydrogenase from Vibrio vulnificus (strain YJ016).